Here is a 163-residue protein sequence, read N- to C-terminus: Phosphopantetheine adenylyltransferase (163 aa).

Ser-10 is a substrate binding site. ATP contacts are provided by residues 10–11 (SF) and His-18. 3 residues coordinate substrate: Lys-42, Leu-74, and Arg-88. ATP-binding positions include 89–91 (GLR), Glu-99, and 124–130 (YSFLSSS).

This sequence belongs to the bacterial CoaD family. Homohexamer. The cofactor is Mg(2+).

The protein localises to the cytoplasm. It carries out the reaction (R)-4'-phosphopantetheine + ATP + H(+) = 3'-dephospho-CoA + diphosphate. It participates in cofactor biosynthesis; coenzyme A biosynthesis; CoA from (R)-pantothenate: step 4/5. Functionally, reversibly transfers an adenylyl group from ATP to 4'-phosphopantetheine, yielding dephospho-CoA (dPCoA) and pyrophosphate. In Bacillus cereus (strain G9842), this protein is Phosphopantetheine adenylyltransferase.